A 45-amino-acid chain; its full sequence is MTKRTLEGTNRKRKRTSGFRARMRSATGRRVIKARRSKGRARLAV.

Residues 1–10 (MTKRTLEGTN) show a composition bias toward basic and acidic residues. A disordered region spans residues 1-27 (MTKRTLEGTNRKRKRTSGFRARMRSAT). Basic residues predominate over residues 11 to 23 (RKRKRTSGFRARM).

It belongs to the bacterial ribosomal protein bL34 family.

The polypeptide is Large ribosomal subunit protein bL34 (Synechococcus elongatus (strain ATCC 33912 / PCC 7942 / FACHB-805) (Anacystis nidulans R2)).